We begin with the raw amino-acid sequence, 286 residues long: ATP synthase gamma chain (286 aa).

Belongs to the ATPase gamma chain family. F-type ATPases have 2 components, CF(1) - the catalytic core - and CF(0) - the membrane proton channel. CF(1) has five subunits: alpha(3), beta(3), gamma(1), delta(1), epsilon(1). CF(0) has three main subunits: a, b and c.

Its subcellular location is the cell membrane. Its function is as follows. Produces ATP from ADP in the presence of a proton gradient across the membrane. The gamma chain is believed to be important in regulating ATPase activity and the flow of protons through the CF(0) complex. This is ATP synthase gamma chain from Mycoplasma mobile (strain ATCC 43663 / 163K / NCTC 11711) (Mesomycoplasma mobile).